Here is a 490-residue protein sequence, read N- to C-terminus: Betaine aldehyde dehydrogenase (490 aa).

K(+) is bound by residues I27 and D93. 150-152 is a binding site for NAD(+); the sequence is GAW. Residue K162 is the Charge relay system of the active site. An NAD(+)-binding site is contributed by 176-179; that stretch reads KPSE. V180 contributes to the K(+) binding site. 230–233 lines the NAD(+) pocket; sequence GTTT. K(+) is bound at residue L246. E252 serves as the catalytic Proton acceptor. G254, C286, and E387 together coordinate NAD(+). The active-site Nucleophile is C286. C286 is subject to Cysteine sulfenic acid (-SOH). The K(+) site is built by K457 and G460. The active-site Charge relay system is the E464.

The protein belongs to the aldehyde dehydrogenase family. As to quaternary structure, dimer of dimers. The cofactor is K(+).

It carries out the reaction betaine aldehyde + NAD(+) + H2O = glycine betaine + NADH + 2 H(+). It functions in the pathway amine and polyamine biosynthesis; betaine biosynthesis via choline pathway; betaine from betaine aldehyde: step 1/1. Involved in the biosynthesis of the osmoprotectant glycine betaine. Catalyzes the irreversible oxidation of betaine aldehyde to the corresponding acid. The sequence is that of Betaine aldehyde dehydrogenase from Pseudomonas entomophila (strain L48).